The following is a 173-amino-acid chain: Crossover junction endodeoxyribonuclease RuvC (173 aa).

Residues Asp-8, Glu-67, and Asp-139 contribute to the active site. Mg(2+) contacts are provided by Asp-8, Glu-67, and Asp-139.

It belongs to the RuvC family. Homodimer which binds Holliday junction (HJ) DNA. The HJ becomes 2-fold symmetrical on binding to RuvC with unstacked arms; it has a different conformation from HJ DNA in complex with RuvA. In the full resolvosome a probable DNA-RuvA(4)-RuvB(12)-RuvC(2) complex forms which resolves the HJ. Mg(2+) serves as cofactor.

The protein localises to the cytoplasm. The enzyme catalyses Endonucleolytic cleavage at a junction such as a reciprocal single-stranded crossover between two homologous DNA duplexes (Holliday junction).. The RuvA-RuvB-RuvC complex processes Holliday junction (HJ) DNA during genetic recombination and DNA repair. Endonuclease that resolves HJ intermediates. Cleaves cruciform DNA by making single-stranded nicks across the HJ at symmetrical positions within the homologous arms, yielding a 5'-phosphate and a 3'-hydroxyl group; requires a central core of homology in the junction. The consensus cleavage sequence is 5'-(A/T)TT(C/G)-3'. Cleavage occurs on the 3'-side of the TT dinucleotide at the point of strand exchange. HJ branch migration catalyzed by RuvA-RuvB allows RuvC to scan DNA until it finds its consensus sequence, where it cleaves and resolves the cruciform DNA. The sequence is that of Crossover junction endodeoxyribonuclease RuvC from Proteus mirabilis (strain HI4320).